We begin with the raw amino-acid sequence, 398 residues long: MNIHEYQAKRLLHTYGAPIANGVAVYSVEQAEEWAKTLPGPLYVVKSQIHAGGRGKGKFKELPADAKGGVRLAKSVEEVVANAKEMLGNTLVTKQTGEAGKQVNRLYIEDGADIERELYLSILIDRSVGRPAFVVSTEGGMDIEAVAEETPEKIVTVAIDPAKGVTDEDANKLADALKLEGGAREDGLKLFPILYKAFTEKDMSLLEINPLIVMTNGRVRVLDAKVSFDNNALFRHPDIVELRDLTEEDPKEIEASKYDLAYVALDGNIGCMVNGAGLAMATMDIIKLYGAEPANFLDVGGGASKEKVTAAFKIITADPAVEGILVNIFGGIMKCDVIAEGVIAAVKEVGLKVPLVVRLEGTNVELGKKIINESGLNVISADDLDDAAQKIVAAVKGN.

Residues 9-254 (KRLLHTYGAP…LTEEDPKEIE (246 aa)) enclose the ATP-grasp domain. ATP contacts are provided by residues Lys46, 53 to 55 (GRG), Glu109, Ala112, and Glu117. Residues Asn209 and Asp223 each coordinate Mg(2+). Substrate contacts are provided by residues Asn274 and 331–333 (GIM).

It belongs to the succinate/malate CoA ligase beta subunit family. As to quaternary structure, heterotetramer of two alpha and two beta subunits. Mg(2+) serves as cofactor.

The catalysed reaction is succinate + ATP + CoA = succinyl-CoA + ADP + phosphate. It carries out the reaction GTP + succinate + CoA = succinyl-CoA + GDP + phosphate. It participates in carbohydrate metabolism; tricarboxylic acid cycle; succinate from succinyl-CoA (ligase route): step 1/1. Its function is as follows. Succinyl-CoA synthetase functions in the citric acid cycle (TCA), coupling the hydrolysis of succinyl-CoA to the synthesis of either ATP or GTP and thus represents the only step of substrate-level phosphorylation in the TCA. The beta subunit provides nucleotide specificity of the enzyme and binds the substrate succinate, while the binding sites for coenzyme A and phosphate are found in the alpha subunit. The polypeptide is Succinate--CoA ligase [ADP-forming] subunit beta (Brucella abortus (strain S19)).